The primary structure comprises 319 residues: Biotin synthase (319 aa).

The Radical SAM core domain occupies 44–273 (IHGDGIDLCS…EAKIRLAGGR (230 aa)). 3 residues coordinate [4Fe-4S] cluster: C62, C66, and C69. Positions 106, 138, 198, and 268 each coordinate [2Fe-2S] cluster.

Belongs to the radical SAM superfamily. Biotin synthase family. As to quaternary structure, homodimer. It depends on [4Fe-4S] cluster as a cofactor. [2Fe-2S] cluster is required as a cofactor.

It catalyses the reaction (4R,5S)-dethiobiotin + (sulfur carrier)-SH + 2 reduced [2Fe-2S]-[ferredoxin] + 2 S-adenosyl-L-methionine = (sulfur carrier)-H + biotin + 2 5'-deoxyadenosine + 2 L-methionine + 2 oxidized [2Fe-2S]-[ferredoxin]. It functions in the pathway cofactor biosynthesis; biotin biosynthesis; biotin from 7,8-diaminononanoate: step 2/2. Functionally, catalyzes the conversion of dethiobiotin (DTB) to biotin by the insertion of a sulfur atom into dethiobiotin via a radical-based mechanism. The chain is Biotin synthase from Clostridium perfringens (strain ATCC 13124 / DSM 756 / JCM 1290 / NCIMB 6125 / NCTC 8237 / Type A).